The chain runs to 865 residues: cGMP-specific 3',5'-cyclic phosphodiesterase (865 aa).

Low complexity predominate over residues 69-83 (CSCSSQQSSRADSSA). The tract at residues 69-92 (CSCSSQQSSRADSSAPGTPTRKIS) is disordered. Ser-92 is subject to Phosphoserine. 2 GAF domains span residues 154–304 (DVTA…GIVL) and 336–493 (SLEV…GLGI). Residues 526–850 (ETKELQSLAA…QKWQALAEQQ (325 aa)) enclose the PDEase domain. His-603 serves as the catalytic Proton donor. Residues His-607, His-643, Asp-644, and Asp-754 each coordinate Zn(2+). A Mg(2+)-binding site is contributed by Asp-644. Gln-807 serves as a coordination point for 3',5'-cyclic GMP.

It belongs to the cyclic nucleotide phosphodiesterase family. Requires Zn(2+) as cofactor. It depends on Mg(2+) as a cofactor. Phosphorylation is regulated by binding of cGMP to the two allosteric sites. Phosphorylation by PRKG1 leads to its activation. As to expression, isoform PDE5A1 and isoform PDE5A2 are highly expressed in the cerebellum, hippocampus, retina, lung, heart, spleen, and thoracic artery. Isoform PDE5A1, but not isoform PDE5A2, is also abundantly expressed in the pylorus.

The protein localises to the cytoplasm. Its subcellular location is the cytosol. The enzyme catalyses 3',5'-cyclic GMP + H2O = GMP + H(+). It functions in the pathway purine metabolism; 3',5'-cyclic GMP degradation; GMP from 3',5'-cyclic GMP: step 1/1. Its activity is regulated as follows. Inhibited by zaprinast. Plays a role in signal transduction by regulating the intracellular concentration of cyclic nucleotides. This phosphodiesterase catalyzes the specific hydrolysis of cGMP to 5'-GMP. Specifically regulates nitric-oxide-generated cGMP. This Canis lupus familiaris (Dog) protein is cGMP-specific 3',5'-cyclic phosphodiesterase (PDE5A).